The primary structure comprises 543 residues: EH domain-containing protein 2 (543 aa).

Serine 3 and serine 44 each carry phosphoserine. Positions 55–286 (FDGKPMVLVA…DLFRDIQGLP (232 aa)) constitute a Dynamin-type G domain. The G1 motif stretch occupies residues 65–72 (GQYSTGKT). An ATP-binding site is contributed by 65–72 (GQYSTGKT). The tract at residues 91–92 (EP) is G2 motif. Residues 153-156 (DTPG) are G3 motif. The interval 219 to 222 (NKAD) is G4 motif. Lysine 220 lines the ATP pocket. Position 243 (valine 243) is a region of interest, G5 motif. Tryptophan 258 is a binding site for ATP. Residues 320-340 (SVFGKENKKKQLIFKLPVIFA) form a mediates membrane-binding region. Serine 438, serine 468, serine 470, serine 484, and serine 493 each carry phosphoserine. Residues 449 to 537 (DKSKYDEIFY…RRLVPPSKRR (89 aa)) enclose the EH domain. The EF-hand domain occupies 481-516 (LPNSVLGRIWKLSDVDRDGMLDDEEFALASHLIEAK). Ca(2+)-binding residues include aspartate 494, aspartate 496, aspartate 498, methionine 500, and glutamate 505. Residues 521 to 543 (GLPTNLPRRLVPPSKRRQKGSAE) form a disordered region. The span at 534–543 (SKRRQKGSAE) shows a compositional bias: basic residues.

It belongs to the TRAFAC class dynamin-like GTPase superfamily. Dynamin/Fzo/YdjA family. EHD subfamily. In terms of assembly, homodimer and homooligomer. Interacts with EHD1. May also interact with EHD3 and EHD4. Interacts with MYOF. Interacts with EHBP1. Interacts with FER1L5 (via second C2 domain). Interacts with CAV1 in a cholesterol-dependent manner. Interacts (via EH domain) with PACSIN2 (via NPF motifs); this interaction probably stabilizes the caveolae.

It is found in the cell membrane. It localises to the membrane. The protein resides in the caveola. Its subcellular location is the endosome membrane. The protein localises to the cytoplasm. It is found in the cytosol. With respect to regulation, the very low intrinsic ATPase activity is increased upon interaction with liposomes. ATP- and membrane-binding protein that controls membrane reorganization/tubulation upon ATP hydrolysis. Plays a role in membrane trafficking between the plasma membrane and endosomes. Important for the internalization of GLUT4. Required for fusion of myoblasts to skeletal muscle myotubes. Required for normal translocation of FER1L5 to the plasma membrane. Regulates the equilibrium between cell surface-associated and cell surface-dissociated caveolae by constraining caveolae at the cell membrane. In Rattus norvegicus (Rat), this protein is EH domain-containing protein 2.